The following is a 160-amino-acid chain: SsrA-binding protein (160 aa).

It belongs to the SmpB family.

It is found in the cytoplasm. Required for rescue of stalled ribosomes mediated by trans-translation. Binds to transfer-messenger RNA (tmRNA), required for stable association of tmRNA with ribosomes. tmRNA and SmpB together mimic tRNA shape, replacing the anticodon stem-loop with SmpB. tmRNA is encoded by the ssrA gene; the 2 termini fold to resemble tRNA(Ala) and it encodes a 'tag peptide', a short internal open reading frame. During trans-translation Ala-aminoacylated tmRNA acts like a tRNA, entering the A-site of stalled ribosomes, displacing the stalled mRNA. The ribosome then switches to translate the ORF on the tmRNA; the nascent peptide is terminated with the 'tag peptide' encoded by the tmRNA and targeted for degradation. The ribosome is freed to recommence translation, which seems to be the essential function of trans-translation. This chain is SsrA-binding protein, found in Erwinia tasmaniensis (strain DSM 17950 / CFBP 7177 / CIP 109463 / NCPPB 4357 / Et1/99).